Consider the following 159-residue polypeptide: MGGLRKPKKKYLAGKPKKIWNKQLLLEELQLMGEYGLRNKRELWLARARLKWITRRARSLLSMTAEERAPLEMPFKEKLYKAGFIEDPNVPLDRILSLDVRAILERRLQTIVYRMGLAKSIYHARQLIVHGHIAIEGRRVTSPGFLVPRELEDKITLVQ.

The region spanning 106 to 158 (RRLQTIVYRMGLAKSIYHARQLIVHGHIAIEGRRVTSPGFLVPRELEDKITLV) is the S4 RNA-binding domain.

Belongs to the universal ribosomal protein uS4 family. As to quaternary structure, part of the 30S ribosomal subunit. Contacts protein S5. The interaction surface between S4 and S5 is involved in control of translational fidelity.

Functionally, one of the primary rRNA binding proteins, it binds directly to 16S rRNA where it nucleates assembly of the body of the 30S subunit. With S5 and S12 plays an important role in translational accuracy. The polypeptide is Small ribosomal subunit protein uS4 (Pyrobaculum arsenaticum (strain DSM 13514 / JCM 11321 / PZ6)).